Consider the following 470-residue polypeptide: Uronate isomerase (470 aa).

It belongs to the metallo-dependent hydrolases superfamily. Uronate isomerase family.

The enzyme catalyses D-glucuronate = D-fructuronate. The catalysed reaction is aldehydo-D-galacturonate = keto-D-tagaturonate. It participates in carbohydrate metabolism; pentose and glucuronate interconversion. This Vibrio vulnificus (strain YJ016) protein is Uronate isomerase.